The chain runs to 54 residues: ComX pheromone (54 aa).

The propeptide occupies 1-46; it reads MQEIVGYLVKNPEVLDEVMKGRASLLNIDKDQLKSIVDAFGGLQIY. Tryptophan 51 is lipidated: 3'-geranyl-2',N2-cyclotryptophan.

Interacts directly with the sensor histidine kinase ComP and stimulates its activity. Trp-51 is modified by isoprenylation, probably by geranylation, which is essential for activity. Modified by the tryptophan prenyltransferase ComQ before export to the extracellular environment. The type of isoprenyl derivative differs among the different pherotypes and depends on ComX primary sequence.

It localises to the secreted. Functionally, part of a major quorum-sensing system that regulates the development of genetic competence. Acts through the activation of the two-component regulatory system ComP/ComA composed of a sensor histidine kinase, ComP, and a response regulator, ComA. The chain is ComX pheromone from Bacillus mojavensis.